The sequence spans 843 residues: Translation initiation factor IF-2 (843 aa).

The tract at residues 198 to 219 (YKREEEEKKSKAKKAGGKGFKK) is disordered. The span at 207–219 (SKAKKAGGKGFKK) shows a compositional bias: basic residues. In terms of domain architecture, tr-type G spans 345 to 512 (SRAPVVTIMG…AVLLQSEVLE (168 aa)). The segment at 354–361 (GHVDHGKT) is G1. 354-361 (GHVDHGKT) contributes to the GTP binding site. Residues 379–383 (GITQH) form a G2 region. The segment at 400–403 (DTPG) is G3. GTP contacts are provided by residues 400–404 (DTPGH) and 454–457 (NKID). Positions 454–457 (NKID) are G4. Residues 490-492 (SAK) form a G5 region.

It belongs to the TRAFAC class translation factor GTPase superfamily. Classic translation factor GTPase family. IF-2 subfamily.

The protein localises to the cytoplasm. Its function is as follows. One of the essential components for the initiation of protein synthesis. Protects formylmethionyl-tRNA from spontaneous hydrolysis and promotes its binding to the 30S ribosomal subunits. Also involved in the hydrolysis of GTP during the formation of the 70S ribosomal complex. The protein is Translation initiation factor IF-2 of Francisella tularensis subsp. tularensis (strain WY96-3418).